A 320-amino-acid chain; its full sequence is Esterase LipI (320 aa).

Catalysis depends on residues Ser-165, Asp-261, and His-291.

Belongs to the 'GDXG' lipolytic enzyme family.

It catalyses the reaction a fatty acid ester + H2O = an aliphatic alcohol + a fatty acid + H(+). The catalysed reaction is a butanoate ester + H2O = an aliphatic alcohol + butanoate + H(+). The enzyme catalyses an octanoate ester + H2O = an aliphatic alcohol + octanoate + H(+). It carries out the reaction decanoate ester + H2O = decanoate + an aliphatic alcohol + H(+). It catalyses the reaction an acetyl ester + H2O = an aliphatic alcohol + acetate + H(+). The catalysed reaction is a dodecanoate ester + H2O = an aliphatic alcohol + dodecanoate + H(+). Inhibited by ionic detergents SDS (anions) and CTAB (cationic). Strongly inhibited by Zn(2+). Esterase that can hydrolyze short-chain esters with the carbon chain containing 2 to 12 carbon atoms. In vitro, pNP-butyrate is the preferred substrate. This Mycobacterium tuberculosis (strain ATCC 25618 / H37Rv) protein is Esterase LipI.